The chain runs to 165 residues: Putative pre-16S rRNA nuclease (165 aa).

The protein belongs to the YqgF nuclease family.

The protein localises to the cytoplasm. In terms of biological role, could be a nuclease involved in processing of the 5'-end of pre-16S rRNA. The polypeptide is Putative pre-16S rRNA nuclease (Brucella anthropi (strain ATCC 49188 / DSM 6882 / CCUG 24695 / JCM 21032 / LMG 3331 / NBRC 15819 / NCTC 12168 / Alc 37) (Ochrobactrum anthropi)).